Consider the following 210-residue polypeptide: MLSSLSPHLSNVRQTLTQVLNFALVLSTAFMMWKALSIYTNSSSPIVVVLSGSMEPAFQRGDLLFLWNRSPRAEVGEIVVYNVRGKDIPIVHRVVRAFGDDARDPKEGGGKKGKSASGTGKKESVAAGAVHSDSSFVSHKLLTKGDNNIADDTELYARGQDYLDRKVDLVGSVRGYIPAVGYVTIMLSEHPWLKSVLLGLMGVMVILQRE.

At 1–14 the chain is on the cytoplasmic side; it reads MLSSLSPHLSNVRQ. The helical; Signal-anchor for type II membrane protein transmembrane segment at 15–31 threads the bilayer; that stretch reads TLTQVLNFALVLSTAFM. The Lumenal segment spans residues 32 to 210; sequence MWKALSIYTN…MGVMVILQRE (179 aa). Asn-41 carries N-linked (GlcNAc...) asparagine glycosylation. Residues Ser-53 and His-92 each act as charge relay system in the active site. A compositionally biased stretch (basic and acidic residues) spans 101–110; the sequence is DARDPKEGGG. Residues 101–124 are disordered; that stretch reads DARDPKEGGGKKGKSASGTGKKES. Asp-152 acts as the Charge relay system in catalysis. Positions 196-207 are C-terminal short (CTS) helix; the sequence is VLLGLMGVMVIL.

Belongs to the peptidase S26B family. Component of the signal peptidase complex (SPC) composed of a catalytic subunit SEC11 and three accessory subunits SPC1, SPC2 and SPC3. The complex induces a local thinning of the ER membrane which is used to measure the length of the signal peptide (SP) h-region of protein substrates. This ensures the selectivity of the complex towards h-regions shorter than 18-20 amino acids. SPC associates with the translocon complex.

The protein resides in the endoplasmic reticulum membrane. It catalyses the reaction Cleavage of hydrophobic, N-terminal signal or leader sequences from secreted and periplasmic proteins.. Catalytic component of the signal peptidase complex (SPC) which catalyzes the cleavage of N-terminal signal sequences from nascent proteins as they are translocated into the lumen of the endoplasmic reticulum. Specifically cleaves N-terminal signal peptides that contain a hydrophobic alpha-helix (h-region) shorter than 18-20 amino acids. This is Signal peptidase complex catalytic subunit SEC11 (SEC11) from Uncinocarpus reesii (strain UAMH 1704).